The following is a 179-amino-acid chain: Adenine phosphoribosyltransferase (179 aa).

This sequence belongs to the purine/pyrimidine phosphoribosyltransferase family. In terms of assembly, homodimer.

Its subcellular location is the cytoplasm. It catalyses the reaction AMP + diphosphate = 5-phospho-alpha-D-ribose 1-diphosphate + adenine. It functions in the pathway purine metabolism; AMP biosynthesis via salvage pathway; AMP from adenine: step 1/1. Its function is as follows. Catalyzes a salvage reaction resulting in the formation of AMP, that is energically less costly than de novo synthesis. The sequence is that of Adenine phosphoribosyltransferase from Helicobacter pylori (strain G27).